Consider the following 268-residue polypeptide: Undecaprenyl-diphosphatase (268 aa).

Helical transmembrane passes span 4–24, 50–70, 84–104, 109–129, 144–164, 185–205, 214–234, and 247–267; these read STTL…FIPV, IQLG…VSVI, VAVL…HGFI, FETP…LLFV, LPLN…VPGV, AEFS…FDLF, SALG…VLVV, and ALFG…LLAG.

It belongs to the UppP family.

It is found in the cell inner membrane. The catalysed reaction is di-trans,octa-cis-undecaprenyl diphosphate + H2O = di-trans,octa-cis-undecaprenyl phosphate + phosphate + H(+). Functionally, catalyzes the dephosphorylation of undecaprenyl diphosphate (UPP). Confers resistance to bacitracin. The protein is Undecaprenyl-diphosphatase of Cereibacter sphaeroides (strain ATCC 17029 / ATH 2.4.9) (Rhodobacter sphaeroides).